Consider the following 385-residue polypeptide: Methylthioribose-1-phosphate isomerase (385 aa).

Residue Asp-256 is the Proton donor of the active site.

It belongs to the eIF-2B alpha/beta/delta subunits family. MtnA subfamily.

It localises to the cytoplasm. The protein resides in the nucleus. The catalysed reaction is 5-(methylsulfanyl)-alpha-D-ribose 1-phosphate = 5-(methylsulfanyl)-D-ribulose 1-phosphate. Its pathway is amino-acid biosynthesis; L-methionine biosynthesis via salvage pathway; L-methionine from S-methyl-5-thio-alpha-D-ribose 1-phosphate: step 1/6. Its function is as follows. Catalyzes the interconversion of methylthioribose-1-phosphate (MTR-1-P) into methylthioribulose-1-phosphate (MTRu-1-P). This is Methylthioribose-1-phosphate isomerase from Arthroderma otae (strain ATCC MYA-4605 / CBS 113480) (Microsporum canis).